Consider the following 787-residue polypeptide: Endonuclease MutS2 (787 aa).

336–343 is an ATP binding site; the sequence is GPNTGGKT. Residues 712-787 form the Smr domain; sequence LDLRGVRYED…GNGATEVQFK (76 aa).

Belongs to the DNA mismatch repair MutS family. MutS2 subfamily. Homodimer. Binds to stalled ribosomes, contacting rRNA.

In terms of biological role, endonuclease that is involved in the suppression of homologous recombination and thus may have a key role in the control of bacterial genetic diversity. Its function is as follows. Acts as a ribosome collision sensor, splitting the ribosome into its 2 subunits. Detects stalled/collided 70S ribosomes which it binds and splits by an ATP-hydrolysis driven conformational change. Acts upstream of the ribosome quality control system (RQC), a ribosome-associated complex that mediates the extraction of incompletely synthesized nascent chains from stalled ribosomes and their subsequent degradation. Probably generates substrates for RQC. This is Endonuclease MutS2 from Lactiplantibacillus plantarum (strain ATCC BAA-793 / NCIMB 8826 / WCFS1) (Lactobacillus plantarum).